The sequence spans 602 residues: Type 2 DNA topoisomerase 6 subunit B (602 aa).

ATP-binding positions include Asn40, Asp71, 92-93 (SR), 102-109 (GQQGIGIS), and Lys425.

Belongs to the TOP6B family. Homodimer. Heterotetramer of two Top6A and two Top6B chains.

The enzyme catalyses ATP-dependent breakage, passage and rejoining of double-stranded DNA.. In terms of biological role, relaxes both positive and negative superturns and exhibits a strong decatenase activity. This chain is Type 2 DNA topoisomerase 6 subunit B, found in Archaeoglobus fulgidus (strain ATCC 49558 / DSM 4304 / JCM 9628 / NBRC 100126 / VC-16).